Consider the following 32-residue polypeptide: uncharacterized protein (32 aa).

A helical transmembrane segment spans residues 3–23; the sequence is IGIIFPVVIFITAVVFLAWFF.

The protein localises to the cell inner membrane. This is an uncharacterized protein from Escherichia coli (strain K12).